Here is a 299-residue protein sequence, read N- to C-terminus: Apolipoprotein E (299 aa).

A signal peptide spans 1 to 18 (MKVLCTVLVVTLLAGCQA). Residues 74–245 (VLMEDTMKAV…RLEEVREQME (172 aa)) are 8 X 22 AA approximate tandem repeats. Repeat copies occupy residues 75-95 (LMED…QELV), 96-117 (PMAE…ARLG), 118-139 (ADME…AMLG), 140-161 (QSAE…KKLL), 162-183 (RDAE…EGAE), 184-206 (RSVS…RAAL), 207-225 (TSQP…LRGR), and 224-242 (GRLE…EVRE). Position 137 is a methionine sulfoxide (methionine 137). Serine 141 is subject to Phosphoserine. An LDL and other lipoprotein receptors binding region spans residues 152–162 (HLRKLRKKLLR). 156–159 (LRKK) contributes to the heparin binding site. The lipid-binding and lipoprotein association stretch occupies residues 205-273 (ALTSQPLQER…GWFEPMVEDM (69 aa)). Position 219–226 (219–226 (GKRLRGRL)) interacts with heparin. The specificity for association with VLDL stretch occupies residues 261-273 (RLKGWFEPMVEDM).

The protein belongs to the apolipoprotein A1/A4/E family. In terms of assembly, homotetramer. May interact with ABCA1; functionally associated with ABCA1 in the biogenesis of HDLs. May interact with APP/A4 amyloid-beta peptide; the interaction is extremely stable in vitro but its physiological significance is unclear. May interact with MAPT. May interact with MAP2. In the cerebrospinal fluid, interacts with secreted SORL1. Interacts with PMEL; this allows the loading of PMEL luminal fragment on ILVs to induce fibril nucleation. In terms of processing, APOE exists as multiple glycosylated and sialylated glycoforms within cells and in plasma. The extent of glycosylation and sialylation are tissue and context specific. Glycated in plasma VLDL. Post-translationally, phosphorylated by FAM20C in the extracellular medium.

The protein resides in the secreted. It is found in the extracellular space. It localises to the extracellular matrix. Its subcellular location is the extracellular vesicle. The protein localises to the endosome. The protein resides in the multivesicular body. In terms of biological role, APOE is an apolipoprotein, a protein associating with lipid particles, that mainly functions in lipoprotein-mediated lipid transport between organs via the plasma and interstitial fluids. APOE is a core component of plasma lipoproteins and is involved in their production, conversion and clearance. Apolipoproteins are amphipathic molecules that interact both with lipids of the lipoprotein particle core and the aqueous environment of the plasma. As such, APOE associates with chylomicrons, chylomicron remnants, very low density lipoproteins (VLDL) and intermediate density lipoproteins (IDL) but shows a preferential binding to high-density lipoproteins (HDL). It also binds a wide range of cellular receptors including the LDL receptor/LDLR, the LDL receptor-related proteins LRP1, LRP2 and LRP8 and the very low-density lipoprotein receptor/VLDLR that mediate the cellular uptake of the APOE-containing lipoprotein particles. Finally, APOE also has a heparin-binding activity and binds heparan-sulfate proteoglycans on the surface of cells, a property that supports the capture and the receptor-mediated uptake of APOE-containing lipoproteins by cells. A main function of APOE is to mediate lipoprotein clearance through the uptake of chylomicrons, VLDLs, and HDLs by hepatocytes. APOE is also involved in the biosynthesis by the liver of VLDLs as well as their uptake by peripheral tissues ensuring the delivery of triglycerides and energy storage in muscle, heart and adipose tissues. By participating in the lipoprotein-mediated distribution of lipids among tissues, APOE plays a critical role in plasma and tissues lipid homeostasis. APOE is also involved in two steps of reverse cholesterol transport, the HDLs-mediated transport of cholesterol from peripheral tissues to the liver, and thereby plays an important role in cholesterol homeostasis. First, it is functionally associated with ABCA1 in the biogenesis of HDLs in tissues. Second, it is enriched in circulating HDLs and mediates their uptake by hepatocytes. APOE also plays an important role in lipid transport in the central nervous system, regulating neuron survival and sprouting. The sequence is that of Apolipoprotein E (APOE) from Ctenomys sociabilis (Social tuco-tuco).